The primary structure comprises 684 residues: Cleavage and polyadenylation specificity factor 73 (684 aa).

Residues H77, H79, D81, H82, H164, and D185 each contribute to the Zn(2+) site. H402 (proton donor) is an active-site residue. H424 is a Zn(2+) binding site.

The protein belongs to the metallo-beta-lactamase superfamily. RNA-metabolizing metallo-beta-lactamase-like family. CPSF3 subfamily. Component of the cleavage and polyadenylation specificity factor (CPSF) complex, composed of at least Clp, Cpsf73, Cpsf100 and Cpsf160. Interacts with Sym and Cpsf100 forming a core cleavage factor required for both polyadenylated and histone mRNA processing. Interacts with Slbp and Lsm11. Requires Zn(2+) as cofactor.

The protein localises to the nucleus. Functionally, component of the cleavage and polyadenylation specificity factor (CPSF) complex that plays a key role in pre-mRNA 3'-end formation, recognizing the AAUAAA signal sequence and interacting with poly(A) polymerase and other factors to bring about cleavage and poly(A) addition. Has endonuclease activity and functions as an mRNA 3'-end-processing endonuclease. Required for the cotranscriptional processing of 3'-ends of polyadenylated and histone pre-mRNA. This Drosophila melanogaster (Fruit fly) protein is Cleavage and polyadenylation specificity factor 73 (Cpsf73).